The chain runs to 88 residues: Defensin-like protein 98 (88 aa).

A signal peptide spans 1 to 29 (MGSLRVSTVVIAVVACLSILLISPTEVDG). Intrachain disulfides connect Cys33–Cys76, Cys40–Cys62, Cys46–Cys73, and Cys50–Cys75.

Belongs to the DEFL family.

Its subcellular location is the secreted. The sequence is that of Defensin-like protein 98 from Arabidopsis thaliana (Mouse-ear cress).